The primary structure comprises 229 residues: MAPFQKAISIDTAIADVRDGSVLMFGGFGGVGSPPSLIEAILDSGVTDLTVICNDAGFPDIGIGPLIVNQRVKTLIASHIGSNPVAGKQMTEGTLEVQFSPQGTLAERIRAGGAGLGGILTDVGIDNQMVCEKKDIVTVAGKRYLIEEALTADFAFINAYIADEFGNLTYDKTARNMNPLMAMAARRTFAEAERIVPMGEISEEMIVTPGVFVEGVVRSEGVKWKWAWE.

26-32 (GGFGGVG) provides a ligand contact to CoA.

The protein belongs to the 3-oxoacid CoA-transferase subunit A family. As to quaternary structure, heterodimer of a subunit alpha and a subunit beta.

The chain is Probable coenzyme A transferase subunit alpha (yodS) from Bacillus subtilis (strain 168).